We begin with the raw amino-acid sequence, 227 residues long: LysM and putative peptidoglycan-binding domain-containing protein 1 (227 aa).

Pro residues predominate over residues 1–11 (MASPSRQPPPG). The segment at 1–22 (MASPSRQPPPGGSGLLQGSRAR) is disordered. Ser-23 and Ser-33 each carry phosphoserine. A LysM domain is found at 40-84 (LEHQLEPGDTLAGLALKYGVTMEQIKRANRLYTNDSIFLKKTLYI). Residues 97–150 (LDSEEEKDGEEKVHPSNSEVWPHSTERKKQETGAGRANGEVLPTPGQETPTPIH) form a disordered region. Ser-99, Ser-166, Ser-194, and Ser-212 each carry phosphoserine.

The sequence is that of LysM and putative peptidoglycan-binding domain-containing protein 1 (LYSMD1) from Homo sapiens (Human).